Consider the following 146-residue polypeptide: Hemoglobin subunit beta (146 aa).

Valine 1 carries the post-translational modification N-acetylvaline. A Globin domain is found at 2–146; the sequence is HLTADEKAAV…VATALAHKYH (145 aa). A Phosphoserine modification is found at serine 44. The residue at position 59 (lysine 59) is an N6-acetyllysine. Position 63 (histidine 63) interacts with heme b. An N6-acetyllysine modification is found at lysine 82. Histidine 92 lines the heme b pocket. Cysteine 93 carries the S-nitrosocysteine modification. Position 144 is an N6-acetyllysine (lysine 144).

This sequence belongs to the globin family. As to quaternary structure, heterotetramer of two alpha chains and two beta chains. As to expression, red blood cells.

Involved in oxygen transport from the lung to the various peripheral tissues. This chain is Hemoglobin subunit beta (HBB), found in Myotis velifer (Mouse-eared bat).